The primary structure comprises 276 residues: uncharacterized protein (276 aa).

One can recognise an AB hydrolase-1 domain in the interval 20 to 137 (PVLIFIPGAN…PPINTFLPDS (118 aa)). The tract at residues 57-76 (GESELTEPLPDSASNPDSDY) is disordered.

It belongs to the AB hydrolase superfamily.

This is an uncharacterized protein from Staphylococcus aureus (strain USA300).